The chain runs to 320 residues: Cytochrome c biogenesis protein CcsA (320 aa).

7 consecutive transmembrane segments (helical) span residues 13-33 (ISFS…FLLV), 46-66 (GMIV…IYSG), 73-93 (LYES…VSYL), 147-167 (MVLG…LLVI), 226-246 (IISL…VWAN), 259-274 (ETWA…IYFH), and 289-309 (VASM…LLGI).

It belongs to the CcmF/CycK/Ccl1/NrfE/CcsA family. May interact with Ccs1.

The protein resides in the plastid. The protein localises to the chloroplast thylakoid membrane. Its function is as follows. Required during biogenesis of c-type cytochromes (cytochrome c6 and cytochrome f) at the step of heme attachment. The polypeptide is Cytochrome c biogenesis protein CcsA (Gossypium barbadense (Sea Island cotton)).